Reading from the N-terminus, the 932-residue chain is 2-oxoglutarate dehydrogenase E1 component (932 aa).

It belongs to the alpha-ketoglutarate dehydrogenase family. In terms of assembly, homodimer. Part of the 2-oxoglutarate dehydrogenase (OGDH) complex composed of E1 (2-oxoglutarate dehydrogenase), E2 (dihydrolipoamide succinyltransferase) and E3 (dihydrolipoamide dehydrogenase); the complex contains multiple copies of the three enzymatic components (E1, E2 and E3). Requires thiamine diphosphate as cofactor.

It catalyses the reaction N(6)-[(R)-lipoyl]-L-lysyl-[protein] + 2-oxoglutarate + H(+) = N(6)-[(R)-S(8)-succinyldihydrolipoyl]-L-lysyl-[protein] + CO2. E1 component of the 2-oxoglutarate dehydrogenase (OGDH) complex which catalyzes the decarboxylation of 2-oxoglutarate, the first step in the conversion of 2-oxoglutarate to succinyl-CoA and CO(2). In Staphylococcus aureus (strain MRSA252), this protein is 2-oxoglutarate dehydrogenase E1 component.